Consider the following 571-residue polypeptide: Carboxylesterase 3B (571 aa).

Residues 1–31 (MTNMRTMIPAGSSVLVWVTCLLLAFVTTVTG) form the signal peptide. Cys100 and Cys127 are disulfide-bonded. The Acyl-ester intermediate role is filled by Ser232. Cys284 and Cys295 are joined by a disulfide. Asn311 is a glycosylation site (N-linked (GlcNAc...) asparagine). Active-site charge relay system residues include Glu347 and His460. The Prevents secretion from ER motif lies at 568-571 (PEEL).

Belongs to the type-B carboxylesterase/lipase family.

The protein localises to the endoplasmic reticulum lumen. The catalysed reaction is a carboxylic ester + H2O = an alcohol + a carboxylate + H(+). In terms of biological role, involved in the detoxification of xenobiotics and in the activation of ester and amide prodrugs. This Mus musculus (Mouse) protein is Carboxylesterase 3B (Ces3b).